The sequence spans 362 residues: Alpha-2-HS-glycoprotein (362 aa).

Residues 1-15 form the signal peptide; sequence LILFFCLAQLWGCRA. The Cystatin fetuin-A-type 1 domain maps to 24 to 130; sequence YREPACDDVE…QFSVLFAKCD (107 aa). 6 disulfide bridges follow: C29–C353, C86–C97, C111–C129, C143–C146, C205–C216, and C227–C244. N96 is a glycosylation site (N-linked (GlcNAc...) asparagine). A phosphoserine mark is found at S131, S132, and S135. The 112-residue stretch at 141–252 folds into the Cystatin fetuin-A-type 2 domain; sequence KVCPNCPLLA…TCTVFQTQPV (112 aa). N-linked (GlcNAc...) asparagine glycosylation is found at N153 and N173. A phosphoserine mark is found at S314, S318, S321, and S323. The O-linked (GalNAc...) threonine glycan is linked to T332.

This sequence belongs to the fetuin family. In terms of processing, phosphorylated by FAM20C in the extracellular medium. As to expression, expressed by the liver and secreted in plasma.

It localises to the secreted. This is Alpha-2-HS-glycoprotein (AHSG) from Sus scrofa (Pig).